We begin with the raw amino-acid sequence, 1641 residues long: Ophiophagus venom factor (1641 aa).

Positions 1–22 (MEGMALYLVAALLIGFPGSSHG) are cleaved as a signal peptide. Asparagine 181 and asparagine 209 each carry an N-linked (GlcNAc...) asparagine glycan. 4 residues coordinate Mg(2+): proline 507, aspartate 530, valine 531, and aspartate 533. Cystine bridges form between cysteine 535–cysteine 796, cysteine 604–cysteine 639, cysteine 672–cysteine 699, cysteine 673–cysteine 706, cysteine 686–cysteine 707, cysteine 852–cysteine 1491, cysteine 1336–cysteine 1467, cysteine 1367–cysteine 1436, cysteine 1484–cysteine 1489, cysteine 1496–cysteine 1568, cysteine 1515–cysteine 1639, and cysteine 1615–cysteine 1624. The propeptide occupies 645–728 (RRRRSSVLLL…WESGLFLPRN (84 aa)). The segment at 649–727 (SSVLLLDSKA…QWESGLFLPR (79 aa)) is C3a-like domain. Residues 672 to 707 (CCEDSMHENPMGYTCEKRAKYIQEGDACKAAFLECC) form the Anaphylatoxin-like domain. The factor B binding site stretch occupies residues 731–742 (EDGFIQDSDIIP). Positions 981 to 1259 (HLIITPSGCG…VMLFQALAEY (279 aa)) are excised as a propeptide. The interval 981 to 1259 (HLIITPSGCG…VMLFQALAEY (279 aa)) is C3d-like domain. Positions 989 to 992 (CGEQ) form a cross-link, isoglutamyl cysteine thioester (Cys-Gln). The tract at residues 1186–1249 (VLMAASTGKN…GGTYGQTQAT (64 aa)) is factor H binding site. An NTR domain is found at 1496 to 1639 (CSLLSQQEKI…LSNILTIFGC (144 aa)).

Belongs to the venom complement C3 homolog family. In terms of assembly, heterotrimer of alpha, beta and gamma chains; disulfide-linked. May be active with factor B in the presence of factor D. In terms of processing, first processed by the removal of 4 Arg residues by furin-type protease, forming two chains, alpha and gamma/beta precursor, linked by a disulfide bond. Probably, a cobrin-like protease cleaves the C3a-like domain and then the C3d-like domain, generating the mature venom factor (OVF). The beta chain is not glycosylated. As to expression, expressed by the venom gland.

The protein localises to the secreted. Functionally, complement-activating protein in cobra venom. It is a structural and functional analog of complement component C3b, the activated form of C3. It binds factor B (CFB), which is subsequently cleaved by factor D (CFD) to form the bimolecular complex OVF/Bb. OVF/Bb is a C3/C5 convertase that cleaves both complement components C3 and C5. Structurally, it resembles the C3b degradation product C3c, which is not able to form a C3/C5 convertase. Unlike C3b/Bb, OVF/Bb is a stable complex and completely resistant to the actions of complement regulatory factors H (CFH) and I (CFI). Therefore, OVF continuously activates complement. As a result, OVF exhibits complement-depleting activity. The protein is Ophiophagus venom factor of Ophiophagus hannah (King cobra).